The following is a 144-amino-acid chain: Protein cornichon homolog 1 (144 aa).

The Cytoplasmic segment spans residues 1–10 (MAFTFAAFCY). A helical membrane pass occupies residues 11 to 31 (MLALLLTATLIFFAIWHIIAF). Over 32–56 (DELKTDYKNPIDQCNTLNPLVLPEY) the chain is Lumenal. The chain crosses the membrane as a helical span at residues 57-77 (LIHAFFCVMFLCAAEWLTLGL). Over 78–122 (NMPLLAYHIWRYMSRPVMSGPGLYDPTTIMNADILAYCQKEGWCK) the chain is Cytoplasmic. The helical transmembrane segment at 123-143 (LAFYLLAFFYYLYGMIYVLVS) threads the bilayer. S144 is a topological domain (lumenal).

Belongs to the cornichon family. Interacts with AREG immature precursor and with immature TGFA, i.e. with a prosegment and lacking full N-glycosylation, but not with the fully N-glycosylated form. In the Golgi apparatus, may form a complex with GORASP55 and transmembrane TGFA.

It localises to the endoplasmic reticulum membrane. The protein resides in the golgi apparatus membrane. Involved in the selective transport and maturation of TGF-alpha family proteins. This chain is Protein cornichon homolog 1 (CNIH1), found in Pongo abelii (Sumatran orangutan).